The sequence spans 187 residues: Small ribosomal subunit protein uS5 (187 aa).

A disordered region spans residues 1-20 (MAERENRRDRRDDRSREETP). The region spanning 22–85 (FADRLVAINR…EQAKRQMIRV (64 aa)) is the S5 DRBM domain.

Belongs to the universal ribosomal protein uS5 family. As to quaternary structure, part of the 30S ribosomal subunit. Contacts proteins S4 and S8.

Its function is as follows. With S4 and S12 plays an important role in translational accuracy. Located at the back of the 30S subunit body where it stabilizes the conformation of the head with respect to the body. The chain is Small ribosomal subunit protein uS5 from Cereibacter sphaeroides (strain ATCC 17029 / ATH 2.4.9) (Rhodobacter sphaeroides).